Consider the following 644-residue polypeptide: uncharacterized protein (644 aa).

A helical transmembrane segment spans residues 16–38 (LLSYLGVVGVGIAGLCIYRSVWG). Residues 586-603 (VRQLQKEAGEGEAEEHPR) show a composition bias toward basic and acidic residues. The tract at residues 586–613 (VRQLQKEAGEGEAEEHPRARPAAGKAQR) is disordered.

The protein resides in the membrane. This is an uncharacterized protein from Treponema pallidum (strain Nichols).